A 356-amino-acid chain; its full sequence is sn-glycerol-3-phosphate import ATP-binding protein UgpC (356 aa).

The 232-residue stretch at 4 to 235 (LKLQAVTKSW…PASLFVASFI (232 aa)) folds into the ABC transporter domain. 37–44 (GPSGCGKS) provides a ligand contact to ATP.

This sequence belongs to the ABC transporter superfamily. sn-glycerol-3-phosphate importer (TC 3.A.1.1.3) family. As to quaternary structure, the complex is composed of two ATP-binding proteins (UgpC), two transmembrane proteins (UgpA and UgpE) and a solute-binding protein (UgpB).

The protein localises to the cell inner membrane. The catalysed reaction is sn-glycerol 3-phosphate(out) + ATP + H2O = sn-glycerol 3-phosphate(in) + ADP + phosphate + H(+). In terms of biological role, part of the ABC transporter complex UgpBAEC involved in sn-glycerol-3-phosphate (G3P) import. Responsible for energy coupling to the transport system. This is sn-glycerol-3-phosphate import ATP-binding protein UgpC from Escherichia coli O6:H1 (strain CFT073 / ATCC 700928 / UPEC).